Reading from the N-terminus, the 942-residue chain is Exopolysaccharide phosphotransferase SCO2592 (942 aa).

This sequence belongs to the stealth family.

The chain is Exopolysaccharide phosphotransferase SCO2592 from Streptomyces coelicolor (strain ATCC BAA-471 / A3(2) / M145).